A 373-amino-acid chain; its full sequence is Alanine dehydrogenase (373 aa).

Residues Arg-15 and Lys-74 each coordinate substrate. His-95 acts as the Proton donor/acceptor in catalysis. Residues Ser-133, 177-178 (QA), Asp-197, Ser-219, 238-239 (VL), 266-269 (IAID), and 298-301 (VANM) each bind NAD(+). Asp-269 (proton donor/acceptor) is an active-site residue.

Belongs to the AlaDH/PNT family. As to quaternary structure, homohexamer. Trimer of dimer.

The catalysed reaction is L-alanine + NAD(+) + H2O = pyruvate + NH4(+) + NADH + H(+). Its pathway is amino-acid degradation; L-alanine degradation via dehydrogenase pathway; NH(3) and pyruvate from L-alanine: step 1/1. In terms of biological role, catalyzes the reversible reductive amination of pyruvate to L-alanine. May play a role in cell wall synthesis as L-alanine is an important constituent of the peptidoglycan layer. The protein is Alanine dehydrogenase (ald) of Staphylococcus haemolyticus (strain JCSC1435).